We begin with the raw amino-acid sequence, 587 residues long: Prolycopene isomerase 1, chloroplastic (587 aa).

A compositionally biased stretch (low complexity) spans methionine 1–proline 13. The segment at methionine 1 to serine 21 is disordered. The N-terminal 50 residues, methionine 1 to valine 50, are a transit peptide targeting the chloroplast.

Belongs to the carotenoid/retinoid oxidoreductase family. CrtISO subfamily. NAD(+) serves as cofactor. The cofactor is NADP(+). Requires FAD as cofactor. In terms of tissue distribution, up-regulated in the flower buds and flower lip tissue, while it is weakly expressed in leaves.

It is found in the plastid. Its subcellular location is the chloroplast membrane. The enzyme catalyses 7,7',9,9'-tetra-cis-lycopene = all-trans-lycopene. Its pathway is carotenoid biosynthesis; lycopene biosynthesis. In terms of biological role, carotene cis-trans-isomerase that converts 7,9,9'-tri-cis-neurosporene to 9'-cis-neurosporene and 7,9,9',7'-tetra-cis-lycopene (also known as prolycopene) into all-trans-lycopene. Isomerization requires redox-active components, suggesting that isomerization is achieved by a reversible redox reaction acting at specific double bonds. Isomerizes adjacent cis-double bonds at C7 and C9 pairwise into the trans-configuration, but is incapable of isomerizing single cis-double bonds at C9 and C9'. The polypeptide is Prolycopene isomerase 1, chloroplastic (CRTISO1) (Oncidium hybrid cultivar (Orchid)).